The chain runs to 160 residues: Transcriptional repressor NrdR (160 aa).

A zinc finger spans residues 3–34 (CPYCQYEDTQVKDSRPAEEGAVIRRRRVCSVC). Residues 49–139 (LLITKKNGRC…VYRDFRNASD (91 aa)) enclose the ATP-cone domain.

Belongs to the NrdR family. Zn(2+) is required as a cofactor.

In terms of biological role, negatively regulates transcription of bacterial ribonucleotide reductase nrd genes and operons by binding to NrdR-boxes. The polypeptide is Transcriptional repressor NrdR (Bartonella tribocorum (strain CIP 105476 / IBS 506)).